The chain runs to 554 residues: Phosphomethylpyrimidine synthase (554 aa).

Substrate contacts are provided by residues Asn-188, Met-217, Tyr-246, His-282, 302–304 (SRG), 343–346 (DGLR), and Glu-382. His-386 lines the Zn(2+) pocket. Tyr-409 is a substrate binding site. His-450 is a Zn(2+) binding site. [4Fe-4S] cluster contacts are provided by Cys-530, Cys-533, and Cys-538.

This sequence belongs to the ThiC family. In terms of assembly, homodimer. It depends on [4Fe-4S] cluster as a cofactor.

It catalyses the reaction 5-amino-1-(5-phospho-beta-D-ribosyl)imidazole + S-adenosyl-L-methionine = 4-amino-2-methyl-5-(phosphooxymethyl)pyrimidine + CO + 5'-deoxyadenosine + formate + L-methionine + 3 H(+). It participates in cofactor biosynthesis; thiamine diphosphate biosynthesis. Catalyzes the synthesis of the hydroxymethylpyrimidine phosphate (HMP-P) moiety of thiamine from aminoimidazole ribotide (AIR) in a radical S-adenosyl-L-methionine (SAM)-dependent reaction. The chain is Phosphomethylpyrimidine synthase from Coxiella burnetii (strain CbuK_Q154) (Coxiella burnetii (strain Q154)).